The chain runs to 157 residues: Biotin carboxyl carrier protein of acetyl-CoA carboxylase (157 aa).

The region spanning 80–156 is the Biotinyl-binding domain; the sequence is YATIVSPMVG…DCGQALMKVE (77 aa). Position 122 is an N6-biotinyllysine (K122).

Its subcellular location is the plastid. It localises to the chloroplast. The protein operates within lipid metabolism; fatty acid biosynthesis. In terms of biological role, this protein is a component of the acetyl coenzyme A carboxylase complex; first, biotin carboxylase catalyzes the carboxylation of the carrier protein and then the transcarboxylase transfers the carboxyl group to form malonyl-CoA. This is Biotin carboxyl carrier protein of acetyl-CoA carboxylase (accB) from Porphyra purpurea (Red seaweed).